An 895-amino-acid chain; its full sequence is Stonin-2 (895 aa).

Disordered regions lie at residues 10–101, 144–204, and 236–279; these read THQS…AISN, ASES…METI, and NEVG…PKST. The span at 64–73 shows a compositional bias: basic and acidic residues; that stretch reads SHSEQDDSSE. Composition is skewed to polar residues over residues 145-169 and 179-193; these read SESS…TDLQ and GRAS…SSSL. Phosphoserine is present on residues S278, S284, and S299. Disordered stretches follow at residues 291 to 326 and 386 to 424; these read ISSL…SPIN and QIDD…PRDG. Short sequence motifs (NPF) lie at residues 310-312 and 326-328; these read NPF. The segment covering 311–323 has biased composition (polar residues); the sequence is PFLNESLQDIQPS. Positions 424-557 constitute an SHD domain; it reads GWPMMLRIPE…DLPVQSMDLS (134 aa). Residues 565-872 form the MHD domain; that stretch reads EEEITVDIRD…AHYSYKVEIE (308 aa). At S759 the chain carries Phosphoserine.

It belongs to the Stoned B family. In terms of assembly, interacts with the second C2 domain of synaptotagmins SYT1 and SYT2. Interacts with EPS15, EPS15R and ITSN1. Interacts indirectly with the AP-2 adapter complex. Interacts with TOR1A and COPS4; the interaction controls STON2 protein stability. Post-translationally, phosphorylated in vitro by PKD. In terms of processing, neddylated and ubiquitinated; leading to its degradation and inhibited by TOR1A and COPS4.

The protein localises to the synapse. The protein resides in the synaptosome. Its subcellular location is the cytoplasm. It localises to the membrane. Functionally, adapter protein involved in endocytic machinery. Involved in the synaptic vesicle recycling. May facilitate clathrin-coated vesicle uncoating. In Rattus norvegicus (Rat), this protein is Stonin-2 (Ston2).